Here is a 581-residue protein sequence, read N- to C-terminus: DNA primase (581 aa).

The CHC2-type zinc-finger motif lies at 40-64 (CPFHNEKTPSFTVNGEKQFYHCFGC). The region spanning 259-341 (NRLLVVEGYM…GRQLRFMFLP (83 aa)) is the Toprim domain. The Mg(2+) site is built by glutamate 265, aspartate 309, and aspartate 311.

This sequence belongs to the DnaG primase family. As to quaternary structure, monomer. Interacts with DnaB. It depends on Zn(2+) as a cofactor. The cofactor is Mg(2+).

The enzyme catalyses ssDNA + n NTP = ssDNA/pppN(pN)n-1 hybrid + (n-1) diphosphate.. Functionally, RNA polymerase that catalyzes the synthesis of short RNA molecules used as primers for DNA polymerase during DNA replication. The protein is DNA primase of Shigella flexneri.